We begin with the raw amino-acid sequence, 1052 residues long: Multidrug resistance protein MdtB (1052 aa).

Helical transmembrane passes span 15–37 (LFILRPVATTLFMIAILLAGIIG), 345–362 (FELLLAIALVVMVIYLFL), 367–389 (ATIIPSIAVPLSLVGTFAAMYFL), 396–418 (LTLMALTIATGFVVDDAIVVIEN), 438–460 (GEIGFTIISLTFSLIAVLIPLLF), 472–494 (FAVTLAVAILISAVVSLTLTPMM), 535–557 (HPWLTLSVAFSTLVLTVILYLLI), 867–889 (LWLIIAAIVAMYIVLGVLYESFI), 909–931 (LMLTGNELDVIAIIGIILLIGIV), 968–990 (ILMTTLAALFGALPLMLSTGVGA), and 1000–1022 (MVGGLIVSQVLTLFTTPVIYLLF). Positions 1032–1052 (KNRHRDEDIDSSELLNGQEPQ) are disordered.

It belongs to the resistance-nodulation-cell division (RND) (TC 2.A.6) family. MdtB subfamily. As to quaternary structure, part of a tripartite efflux system composed of MdtA, MdtB and MdtC. MdtB forms a heteromultimer with MdtC.

It localises to the cell inner membrane. This is Multidrug resistance protein MdtB from Yersinia pestis.